The following is a 288-amino-acid chain: tRNA (guanine-N(1)-)-methyltransferase (288 aa).

The disordered stretch occupies residues 82–105 (ATDAVDTSDPGDSAAPDSSAPSGA). A compositionally biased stretch (low complexity) spans 89 to 105 (SDPGDSAAPDSSAPSGA). Residues Gly-137 and 162–167 (IGDYVL) each bind S-adenosyl-L-methionine.

The protein belongs to the RNA methyltransferase TrmD family. In terms of assembly, homodimer.

It localises to the cytoplasm. It catalyses the reaction guanosine(37) in tRNA + S-adenosyl-L-methionine = N(1)-methylguanosine(37) in tRNA + S-adenosyl-L-homocysteine + H(+). Specifically methylates guanosine-37 in various tRNAs. The sequence is that of tRNA (guanine-N(1)-)-methyltransferase from Bifidobacterium longum (strain DJO10A).